The sequence spans 453 residues: Putative amino acid/polyamine transporter MPH_07630_2 (453 aa).

The next 3 helical transmembrane spans lie at Ile-2–Val-21, Val-30–Ala-50, and Val-81–Ala-101. Asn-110 carries N-linked (GlcNAc...) asparagine glycosylation. The next 2 membrane-spanning stretches (helical) occupy residues Trp-121 to Leu-141 and Ala-151 to Asn-171. A glycan (N-linked (GlcNAc...) asparagine) is linked at Asn-186. The next 2 helical transmembrane spans lie at Ala-193 to Pro-213 and Ile-231 to Phe-251. Asn-274 is a glycosylation site (N-linked (GlcNAc...) asparagine). 4 helical membrane passes run Gly-277–Ala-297, Leu-330–Ile-350, Phe-358–Leu-378, and Gly-403–Phe-423. An N-linked (GlcNAc...) asparagine glycan is attached at Asn-435.

It belongs to the amino acid-polyamine-organocation (APC) superfamily.

Its subcellular location is the membrane. The sequence is that of Putative amino acid/polyamine transporter MPH_07630_2 from Macrophomina phaseolina (strain MS6) (Charcoal rot fungus).